We begin with the raw amino-acid sequence, 344 residues long: 3-isopropylmalate dehydrogenase (344 aa).

Substrate is bound by residues Arg93, Arg103, Arg131, and Asp215. Positions 215, 239, and 243 each coordinate Mg(2+). 273–285 (GSAPDIAGKGIAN) provides a ligand contact to NAD(+).

It belongs to the isocitrate and isopropylmalate dehydrogenases family. LeuB type 1 subfamily. Homodimer. Requires Mg(2+) as cofactor. Mn(2+) is required as a cofactor.

Its subcellular location is the cytoplasm. It catalyses the reaction (2R,3S)-3-isopropylmalate + NAD(+) = 4-methyl-2-oxopentanoate + CO2 + NADH. It functions in the pathway amino-acid biosynthesis; L-leucine biosynthesis; L-leucine from 3-methyl-2-oxobutanoate: step 3/4. Catalyzes the oxidation of 3-carboxy-2-hydroxy-4-methylpentanoate (3-isopropylmalate) to 3-carboxy-4-methyl-2-oxopentanoate. The product decarboxylates to 4-methyl-2 oxopentanoate. The chain is 3-isopropylmalate dehydrogenase from Streptococcus mutans serotype c (strain ATCC 700610 / UA159).